We begin with the raw amino-acid sequence, 73 residues long: UPF0435 protein BH2488 (73 aa).

This sequence belongs to the UPF0435 family.

The protein is UPF0435 protein BH2488 of Halalkalibacterium halodurans (strain ATCC BAA-125 / DSM 18197 / FERM 7344 / JCM 9153 / C-125) (Bacillus halodurans).